A 213-amino-acid polypeptide reads, in one-letter code: Lactobacillus shifted protein (213 aa).

The span at 28 to 38 (PRFTENAMQPN) shows a compositional bias: polar residues. Disordered regions lie at residues 28-56 (PRFT…DATP) and 182-213 (PTSS…YEQR).

The chain is Lactobacillus shifted protein (lbsA) from Emericella nidulans (strain FGSC A4 / ATCC 38163 / CBS 112.46 / NRRL 194 / M139) (Aspergillus nidulans).